The sequence spans 305 residues: Ribonuclease Z (305 aa).

7 residues coordinate Zn(2+): H63, H65, D67, H68, H142, D209, and H267. Catalysis depends on D67, which acts as the Proton acceptor.

This sequence belongs to the RNase Z family. Homodimer. Zn(2+) serves as cofactor.

It carries out the reaction Endonucleolytic cleavage of RNA, removing extra 3' nucleotides from tRNA precursor, generating 3' termini of tRNAs. A 3'-hydroxy group is left at the tRNA terminus and a 5'-phosphoryl group is left at the trailer molecule.. Its function is as follows. Zinc phosphodiesterase, which displays some tRNA 3'-processing endonuclease activity. Probably involved in tRNA maturation, by removing a 3'-trailer from precursor tRNA. The sequence is that of Ribonuclease Z from Nocardia farcinica (strain IFM 10152).